The following is a 140-amino-acid chain: Cysteine protease inhibitor 6 (140 aa).

C103 and C109 are disulfide-bonded.

This sequence belongs to the protease inhibitor I3 (leguminous Kunitz-type inhibitor) family.

The protein resides in the vacuole. Inhibitor of cysteine proteases. May protect the plant by inhibiting proteases of invading organisms. The sequence is that of Cysteine protease inhibitor 6 from Solanum tuberosum (Potato).